Reading from the N-terminus, the 873-residue chain is Alanine--tRNA ligase (873 aa).

Histidine 563, histidine 567, cysteine 665, and histidine 669 together coordinate Zn(2+).

The protein belongs to the class-II aminoacyl-tRNA synthetase family. Zn(2+) serves as cofactor.

The protein resides in the cytoplasm. The catalysed reaction is tRNA(Ala) + L-alanine + ATP = L-alanyl-tRNA(Ala) + AMP + diphosphate. Catalyzes the attachment of alanine to tRNA(Ala) in a two-step reaction: alanine is first activated by ATP to form Ala-AMP and then transferred to the acceptor end of tRNA(Ala). Also edits incorrectly charged Ser-tRNA(Ala) and Gly-tRNA(Ala) via its editing domain. The polypeptide is Alanine--tRNA ligase (Parabacteroides distasonis (strain ATCC 8503 / DSM 20701 / CIP 104284 / JCM 5825 / NCTC 11152)).